The sequence spans 505 residues: MGSGPLSLPLALSPPRLLLLLLLSLLPVARASEAEHRLFERLFEDYNEIIRPVANVSDPVIIHFEVSMSQLVKVDEVNQIMETNLWLKQIWNDYKLKWNPSDYGGAEFMRVPAQKIWKPDIVLYNNAVGDFQVDDKTKALLKYTGEVTWIPPAIFKSSCKIDVTYFPFDYQNCTMKFGSWSYDKAKIDLVLIGSSMNLKDYWESGEWAIIKAPGYKHDIKYNCCEEIYPDITYSLYIRRLPLFYTINLIIPCLLISFLTVLVFYLPSDCGEKVTLCISVLLSLTVFLLVITETIPSTSLVIPLIGEYLLFTMIFVTLSIVITVFVLNVHYRTPTTHTMPSWVKTVFLNLLPRVMFMTRPTSNEGNAQKPRPLYGAELSNLNCFSRAESKGCKEGYPCQDGMCGYCHHRRIKISNFSANLTRSSSSESVDAVLSLSALSPEIKEAIQSVKYIAENMKAQNEAKEIQDDWKYVAMVIDRIFLWVFTLVCILGTAGLFLQPLMAREDA.

An N-terminal signal peptide occupies residues 1–31 (MGSGPLSLPLALSPPRLLLLLLLSLLPVARA). The Extracellular segment spans residues 32–250 (SEAEHRLFER…PLFYTINLII (219 aa)). N55 and N172 each carry an N-linked (GlcNAc...) asparagine glycan. 2 disulfides stabilise this stretch: C159–C173 and C223–C224. The helical transmembrane segment at 251-266 (PCLLISFLTVLVFYLP) threads the bilayer. Residues 267–268 (SD) lie on the Cytoplasmic side of the membrane. A helical membrane pass occupies residues 269 to 285 (CGEKVTLCISVLLSLTV). Topologically, residues 286–307 (FLLVITETIPSTSLVIPLIGEY) are extracellular. The helical transmembrane segment at 308-326 (LLFTMIFVTLSIVITVFVL) threads the bilayer. Residues 327–474 (NVHYRTPTTH…QDDWKYVAMV (148 aa)) lie on the Cytoplasmic side of the membrane. Phosphoserine is present on residues S413 and S416. Residues 475-493 (IDRIFLWVFTLVCILGTAG) traverse the membrane as a helical segment. The Extracellular portion of the chain corresponds to 494–505 (LFLQPLMAREDA).

This sequence belongs to the ligand-gated ion channel (TC 1.A.9) family. Acetylcholine receptor (TC 1.A.9.1) subfamily. Alpha-3/CHRNA3 sub-subfamily. As to quaternary structure, neuronal AChR is composed of two different types of subunits: alpha and beta. CHRNA3/Alpha-3 subunit can be combined to CHRNA5/alpha-5, CHRNB2/beta-2 CHRNB3/beta-3 or CHRNB4/beta-4 to give rise to functional receptors. Forms stoichiometries such as (CHRNA3)2:(CHRNB4)3 or (CHRNA3:CHRNB4)2:CHRNB3. Part of a complex composed of STUB1/CHIP, VCP/p97, CHRNA3, and UBXN2A that modulates the ubiquitination and endoplasmic reticulum-associated degradation (ERAD) of CHRNA3. Within the complex UBXN2A acts as a scaffold protein required for the interaction of CHRNA3 with VCP/p97, this interaction also inhibits CHRNA3 ubiquitination by STUB1/CHIP and subsequently ERAD. Interacts with UBXN2A (via SEP domain), the interaction is required for the interaction of CHRNA3 in the STUB1:VCP:UBXN2A complex. Interacts with RIC3; which is required for proper folding and assembly. Interacts with LYPD6. In terms of processing, ubiquitinated; by STUB1/CHIP and thereafter degraded by the 26S proteosome complex.

Its subcellular location is the synaptic cell membrane. It localises to the cell membrane. The protein resides in the endoplasmic reticulum. The protein localises to the golgi apparatus. It carries out the reaction Ca(2+)(in) = Ca(2+)(out). The catalysed reaction is K(+)(in) = K(+)(out). The enzyme catalyses Na(+)(in) = Na(+)(out). With respect to regulation, activated by a myriad of ligands such as acetylcholine, cytisine, nicotine, choline and epibatidine. The heteropentamer CHRNA3:CHRNB2 activity is blocked by alpha-conotoxins ImI, ImII, PnIA, GID and MII. The heteropentamer CHRNA3:CHRNB4 activity is blocked by the alpha-conotoxin ImI and AuIB. Functionally, component of neuronal acetylcholine receptors (nAChRs) that function as pentameric, ligand-gated cation channels with high calcium permeability among other activities. nAChRs are excitatory neurotrasnmitter receptors formed by a collection of nAChR subunits known to mediate synaptic transmission in the nervous system and the neuromuscular junction. Each nAchR subunit confers differential attributes to channel properties, including activation, deactivation and desensitization kinetics, pH sensitivity, cation permeability, and binding to allosteric modulators. CHRNA3 forms heteropentameric neuronal acetylcholine receptors with CHRNB2 and CHRNB4, with CHRNA5, and CHRNB3 as accesory subunits. CHRNA3:CHRNB4 being predominant in neurons of the autonomic ganglia, it is known as ganglionic nicotinic receptor. CHRNA3:CHRNB4 or CHRNA3:CHRNA5:CHRNB4 play also an important role in the habenulo-interpeduncular tract, modulating the mesolimbic dopamine system and affecting reward circuits and addiction. Hypothalamic CHRNA3:CHRNB4 nAChR activation by nicotine leads to activation of POMC neurons and a decrease in food intake. Also expressed in the urothelium where it modulates reflex bladder activity by increasing intracellular calcium through extracellular influx and basal ATP release. This is Neuronal acetylcholine receptor subunit alpha-3 from Homo sapiens (Human).